A 105-amino-acid polypeptide reads, in one-letter code: Malonate decarboxylase acyl carrier protein (105 aa).

O-(phosphoribosyl dephospho-coenzyme A)serine is present on Ser28.

This sequence belongs to the MdcC family. In terms of processing, covalently binds the prosthetic group of malonate decarboxylase.

It localises to the cytoplasm. Functionally, subunit of malonate decarboxylase, it is an acyl carrier protein to which acetyl and malonyl thioester residues are bound via a 2'-(5''-phosphoribosyl)-3'-dephospho-CoA prosthetic group and turn over during the catalytic mechanism. The protein is Malonate decarboxylase acyl carrier protein of Xanthomonas axonopodis pv. citri (strain 306).